The following is a 142-amino-acid chain: Universal stress protein C (142 aa).

Belongs to the universal stress protein A family.

The protein resides in the cytoplasm. Functionally, required for resistance to DNA-damaging agents. The chain is Universal stress protein C (uspC) from Salmonella typhimurium (strain LT2 / SGSC1412 / ATCC 700720).